The following is a 461-amino-acid chain: Probable ribonuclease FAU-1 (461 aa).

An S1 motif domain is found at 89 to 158 (GAVFYGEVTE…ARPSLATALR (70 aa)).

The protein belongs to the FAU-1 family.

Functionally, probable RNase involved in rRNA stability through maturation and/or degradation of precursor rRNAs. Binds to RNA in loop regions with AU-rich sequences. The sequence is that of Probable ribonuclease FAU-1 from Natronomonas pharaonis (strain ATCC 35678 / DSM 2160 / CIP 103997 / JCM 8858 / NBRC 14720 / NCIMB 2260 / Gabara) (Halobacterium pharaonis).